The primary structure comprises 298 residues: 4-hydroxy-tetrahydrodipicolinate synthase (298 aa).

Threonine 51 contributes to the pyruvate binding site. The active-site Proton donor/acceptor is tyrosine 139. Residue lysine 167 is the Schiff-base intermediate with substrate of the active site. Isoleucine 209 lines the pyruvate pocket.

This sequence belongs to the DapA family. In terms of assembly, homotetramer; dimer of dimers.

The protein localises to the cytoplasm. The enzyme catalyses L-aspartate 4-semialdehyde + pyruvate = (2S,4S)-4-hydroxy-2,3,4,5-tetrahydrodipicolinate + H2O + H(+). It participates in amino-acid biosynthesis; L-lysine biosynthesis via DAP pathway; (S)-tetrahydrodipicolinate from L-aspartate: step 3/4. Its function is as follows. Catalyzes the condensation of (S)-aspartate-beta-semialdehyde [(S)-ASA] and pyruvate to 4-hydroxy-tetrahydrodipicolinate (HTPA). This chain is 4-hydroxy-tetrahydrodipicolinate synthase, found in Haemophilus influenzae (strain ATCC 51907 / DSM 11121 / KW20 / Rd).